The chain runs to 343 residues: 5-amino-6-(D-ribitylamino)uracil--L-tyrosine 4-hydroxyphenyl transferase (343 aa).

Residues 39-268 (VTYVVNRNIN…AIARILLYPE (230 aa)) form the Radical SAM core domain. [4Fe-4S] cluster is bound by residues Cys53, Cys57, and Cys60.

It belongs to the radical SAM superfamily. CofH family. Consists of two subunits, CofG and CofH. The cofactor is [4Fe-4S] cluster.

The catalysed reaction is 5-amino-6-(D-ribitylamino)uracil + L-tyrosine + S-adenosyl-L-methionine = 5-amino-5-(4-hydroxybenzyl)-6-(D-ribitylimino)-5,6-dihydrouracil + 2-iminoacetate + 5'-deoxyadenosine + L-methionine + H(+). It functions in the pathway cofactor biosynthesis; coenzyme F0 biosynthesis. In terms of biological role, catalyzes the radical-mediated synthesis of 5-amino-5-(4-hydroxybenzyl)-6-(D-ribitylimino)-5,6-dihydrouracil from 5-amino-6-(D-ribitylamino)uracil and L-tyrosine. In Archaeoglobus fulgidus (strain ATCC 49558 / DSM 4304 / JCM 9628 / NBRC 100126 / VC-16), this protein is 5-amino-6-(D-ribitylamino)uracil--L-tyrosine 4-hydroxyphenyl transferase.